A 246-amino-acid polypeptide reads, in one-letter code: tRNA (guanine-N(1)-)-methyltransferase (246 aa).

S-adenosyl-L-methionine contacts are provided by residues Gly-114 and Ile-134–Leu-139.

The protein belongs to the RNA methyltransferase TrmD family. As to quaternary structure, homodimer.

The protein localises to the cytoplasm. The catalysed reaction is guanosine(37) in tRNA + S-adenosyl-L-methionine = N(1)-methylguanosine(37) in tRNA + S-adenosyl-L-homocysteine + H(+). Specifically methylates guanosine-37 in various tRNAs. The protein is tRNA (guanine-N(1)-)-methyltransferase of Coxiella burnetii (strain CbuG_Q212) (Coxiella burnetii (strain Q212)).